The primary structure comprises 94 residues: Protein RnfH (94 aa).

Belongs to the UPF0125 (RnfH) family.

This Yersinia pestis bv. Antiqua (strain Antiqua) protein is Protein RnfH.